Reading from the N-terminus, the 396-residue chain is S-adenosylmethionine synthase (396 aa).

ATP is bound at residue His-16. Position 18 (Asp-18) interacts with Mg(2+). Glu-44 contacts K(+). Glu-57 and Gln-100 together coordinate L-methionine. The tract at residues 100-110 (QSPDINQGVDR) is flexible loop. Residues 165-167 (DAK), Asp-240, 246-247 (RK), Ala-263, and Lys-267 each bind ATP. Asp-240 is a binding site for L-methionine. Position 271 (Lys-271) interacts with L-methionine.

It belongs to the AdoMet synthase family. Homotetramer; dimer of dimers. It depends on Mg(2+) as a cofactor. Requires K(+) as cofactor.

The protein resides in the cytoplasm. It catalyses the reaction L-methionine + ATP + H2O = S-adenosyl-L-methionine + phosphate + diphosphate. Its pathway is amino-acid biosynthesis; S-adenosyl-L-methionine biosynthesis; S-adenosyl-L-methionine from L-methionine: step 1/1. Catalyzes the formation of S-adenosylmethionine (AdoMet) from methionine and ATP. The overall synthetic reaction is composed of two sequential steps, AdoMet formation and the subsequent tripolyphosphate hydrolysis which occurs prior to release of AdoMet from the enzyme. The chain is S-adenosylmethionine synthase from Pseudomonas fluorescens (strain ATCC BAA-477 / NRRL B-23932 / Pf-5).